The sequence spans 606 residues: MACPF domain-containing protein At4g24290 (606 aa).

The region spanning 1–332 is the MACPF domain; that stretch reads MALRLPASKA…PPIEELHQFL (332 aa).

Belongs to the complement C6/C7/C8/C9 (TC 1.C.39) family.

Functionally, negatively controls the salicylic acid (SA)-mediated pathway of programmed cell death in plant immunity. In Arabidopsis thaliana (Mouse-ear cress), this protein is MACPF domain-containing protein At4g24290.